The primary structure comprises 323 residues: Fructose-1,6-bisphosphatase class 1 (323 aa).

Mg(2+) contacts are provided by E84, D103, L105, and D106. Residues 106–109 (DGSS), N198, and K264 contribute to the substrate site. Position 270 (E270) interacts with Mg(2+).

Belongs to the FBPase class 1 family. Homotetramer. It depends on Mg(2+) as a cofactor.

Its subcellular location is the cytoplasm. The enzyme catalyses beta-D-fructose 1,6-bisphosphate + H2O = beta-D-fructose 6-phosphate + phosphate. It functions in the pathway carbohydrate biosynthesis; gluconeogenesis. The protein is Fructose-1,6-bisphosphatase class 1 of Hydrogenovibrio crunogenus (strain DSM 25203 / XCL-2) (Thiomicrospira crunogena).